Reading from the N-terminus, the 138-residue chain is Acid shock protein (138 aa).

A signal peptide spans 1-21 (MKKVLALIVAATMGLSSVAFA). The propeptide occupies 22-85 (ADAVAPAAAA…TKKAPAQKAQ (64 aa)). The segment covering 31 to 50 (APAATTTAAPAAAATKAPAK) has biased composition (low complexity). Residues 31-138 (APAATTTAAP…ATKKAAPAAK (108 aa)) form a disordered region. Composition is skewed to basic residues over residues 51–77 (ATHH…KATK) and 122–131 (AAKKHHKATK).

Belongs to the Asr family. Post-translationally, proteolytic processing gives rise to the active protein.

The protein resides in the periplasm. Functionally, required for growth and/or survival at acidic conditions. The sequence is that of Acid shock protein from Serratia proteamaculans (strain 568).